The primary structure comprises 509 residues: Cytochrome P450 4A10 (509 aa).

A run of 2 helical transmembrane segments spans residues 15–35 and 121–141; these read LSGFLQVASVLGLLLLLVKAV and LLAPWIGYGLLLLNGQPWFQH. Glu-320 is a heme binding site. Ser-439 bears the Phosphoserine mark. Cys-456 provides a ligand contact to heme.

This sequence belongs to the cytochrome P450 family. Heme is required as a cofactor. In terms of tissue distribution, highly expressed in the kidneys of both genders.

The protein localises to the endoplasmic reticulum membrane. It is found in the microsome membrane. It catalyses the reaction an omega-methyl-long-chain fatty acid + reduced [NADPH--hemoprotein reductase] + O2 = an omega-hydroxy-long-chain fatty acid + oxidized [NADPH--hemoprotein reductase] + H2O + H(+). The enzyme catalyses dodecanoate + reduced [NADPH--hemoprotein reductase] + O2 = 12-hydroxydodecanoate + oxidized [NADPH--hemoprotein reductase] + H2O + H(+). It carries out the reaction dodecanoate + reduced [NADPH--hemoprotein reductase] + O2 = 11-hydroxydodecanoate + oxidized [NADPH--hemoprotein reductase] + H2O + H(+). The catalysed reaction is tetradecanoate + reduced [NADPH--hemoprotein reductase] + O2 = 14-hydroxytetradecanoate + oxidized [NADPH--hemoprotein reductase] + H2O + H(+). It catalyses the reaction hexadecanoate + reduced [NADPH--hemoprotein reductase] + O2 = 16-hydroxyhexadecanoate + oxidized [NADPH--hemoprotein reductase] + H2O + H(+). The enzyme catalyses (9Z)-octadecenoate + reduced [NADPH--hemoprotein reductase] + O2 = 18-hydroxy-(9Z)-octadecenoate + oxidized [NADPH--hemoprotein reductase] + H2O + H(+). It carries out the reaction (9Z,12Z)-octadecadienoate + reduced [NADPH--hemoprotein reductase] + O2 = 18-hydroxy-(9Z,12Z)-octadecadienoate + oxidized [NADPH--hemoprotein reductase] + H2O + H(+). The catalysed reaction is (9Z,12Z)-octadecadienoate + reduced [NADPH--hemoprotein reductase] + O2 = 17-hydroxy-(9Z,12Z)-octadecadienoate + oxidized [NADPH--hemoprotein reductase] + H2O + H(+). It catalyses the reaction (5Z,8Z,11Z,14Z)-eicosatetraenoate + reduced [NADPH--hemoprotein reductase] + O2 = 20-hydroxy-(5Z,8Z,11Z,14Z)-eicosatetraenoate + oxidized [NADPH--hemoprotein reductase] + H2O + H(+). The enzyme catalyses 8,9-epoxy-(5Z,11Z,14Z)-eicosatrienoate + reduced [NADPH--hemoprotein reductase] + O2 = 20-hydroxy-8,9-epoxy-(5Z,11Z,14Z)-eicosatrienoate + oxidized [NADPH--hemoprotein reductase] + H2O + H(+). In terms of biological role, a cytochrome P450 monooxygenase involved in the metabolism of fatty acids. Catalyzes predominantly the oxidation of the terminal carbon (omega-oxidation) of long-chain fatty acids. Acts as a major omega-hydroxylase for dodecanoic (lauric) acid in liver. In kidney, may play an important role in omega-hydroxylation of (5Z,8Z,11Z,14Z)-eicosatetraenoic acid (arachidonate) to 20-hydroxyeicosatetraenoic acid (20-HETE), a signaling molecule acting both as vasoconstrictive and natriuretic with overall effect on arterial blood pressure. Also participates in the formation of anti-inflammatory hydroxyepoxyeicosatrienoic acids (HEETs) in kidney by converting 8,9-epoxyeicosatrienoic acid (EET) to 20,8,9-HEET, an activator of PPARA. Displays substantially lower fatty acid omega-1 hydroxylase activity. Mechanistically, uses molecular oxygen inserting one oxygen atom into a substrate, and reducing the second into a water molecule, with two electrons provided by NADPH via cytochrome P450 reductase (CPR; NADPH-ferrihemoprotein reductase). In Mus musculus (Mouse), this protein is Cytochrome P450 4A10.